The primary structure comprises 564 residues: Pachytene checkpoint protein 2 (564 aa).

314–321 is an ATP binding site; it reads GPPGTGKT.

It belongs to the AAA ATPase family. PCH2 subfamily.

The protein localises to the nucleus. The protein resides in the nucleolus. It localises to the chromosome. In terms of biological role, required for the pachytene checkpoint, the meiotic checkpoint that prevents chromosome segregation when defects in recombination and synaptonemal complex formation occurred. Represses meiotic recombination in the rDNA, probably by excluding the meiosis-specific protein HOP1 from the nucleolar region. The sequence is that of Pachytene checkpoint protein 2 (PCH2) from Saccharomyces cerevisiae (strain ATCC 204508 / S288c) (Baker's yeast).